Consider the following 649-residue polypeptide: Epithelial sodium channel subunit gamma (649 aa).

Over 1–55 (MAPGEKIKAKIKKNLPVTGPQAPTIKELMRWYCLNTNTHGCRRIVVSRGRLRRLL) the chain is Cytoplasmic. Residues 56-76 (WIGFTLTAVALILWQCALLVF) traverse the membrane as a helical segment. Over 77–541 (SFYTVSVSIK…GGQLGLWMSC (465 aa)) the chain is Extracellular. 8 disulfides stabilise this stretch: Cys100–Cys283, Cys207–Cys214, Cys260–Cys267, Cys372–Cys457, Cys394–Cys453, Cys398–Cys449, Cys407–Cys434, and Cys409–Cys423. The tract at residues 135–221 (RKRREAESWN…SDCATYTFSS (87 aa)) is gating release of inhibition by proteolysis (GRIP); protease-sensitive region that is responsible for the proteolytic activation of the channel. Asn209 carries an N-linked (GlcNAc...) asparagine glycan. An N-linked (GlcNAc...) asparagine glycan is attached at Asn497. A helical membrane pass occupies residues 542–562 (SVVCVIEIIEVFFIDFFSIIA). Residues 563–649 (RRQWQKAKEW…LTDTQMLDEL (87 aa)) are Cytoplasmic-facing. The PY motif; recruits WW domain-containing proteins and is thereby required for ubiquitination and inhibition of the channel by NEDD4 and NEDD4L signature appears at 623–627 (PPPKY).

It belongs to the amiloride-sensitive sodium channel (TC 1.A.6) family. SCNN1G subfamily. Component of the heterotrimeric epithelial sodium channel (ENaC) composed of an alpha/SCNN1A, a beta/SCNN1B and a gamma/SCNN1G subunit. An additional delta/SCNN1D subunit can replace the alpha/SCNN1A subunit to form an alternative channel with specific properties. Interacts with WWP1 (via WW domains). Interacts with WWP2 (via WW domains); inhibits the channel. Interacts with the full-length immature form of PCSK9 (pro-PCSK9); inhibits ENaC by promoting its proteasomal degradation. Interacts with BPIFA1; the interaction is indirect via SCNN1B and inhibits the proteolytic maturation of SCNN1A and SCNN1G and the activation of ENaC. Phosphorylated on serine and threonine residues. Aldosterone and insulin increase the basal level of phosphorylation. In terms of processing, ubiquitinated. Can be ubiquitinated at multiple sites and undergo monoubiquitination and polyubiquitination. Ubiquitination by NEDD4 or NEDD4L inhibits the ENaC channel through endocytosis, intracellular retention and degradation of its individual subunits. Post-translationally, ENaC is activated through the proteolytic maturation of its subunits. Furin cleaves the SCNN1G subunit first, followed by cleavage by prostasin (PRSS8), which results in a stepwise increase in the open probability of the channel due to the release of an inhibitory tract. BPIFA1, which is recruited by the SCNN1B subunit, prevents the proteolytic activation of ENaC. N-glycosylated. N-linked glycans are processed to complex type during ENaC complex assembly and transport to the plasma membrane. As to expression, expressed in kidney (at protein level).

Its subcellular location is the apical cell membrane. The catalysed reaction is Na(+)(in) = Na(+)(out). With respect to regulation, originally identified and characterized by its inhibition by the diuretic drug amiloride. Its function is as follows. This is one of the three pore-forming subunits of the heterotrimeric epithelial sodium channel (ENaC), a critical regulator of sodium balance and fluid homeostasis. ENaC operates in epithelial tissues, where it mediates the electrodiffusion of sodium ions from extracellular fluid through the apical membrane of cells, with water following osmotically. It plays a key role in maintaining sodium homeostasis through electrogenic sodium reabsorption in the kidneys. Additionally, ENaC is essential for airway surface liquid homeostasis, which is crucial for proper mucus clearance. This is Epithelial sodium channel subunit gamma from Homo sapiens (Human).